The chain runs to 468 residues: MVVALSFPEADPAMSPPSAPELHQDEAQVVEELAANGKHSLSWESPQGPGCGLQNTGNSCYLNAALQCLTHTPPLADYMLSQEHSQTCCSPEGCKMCAMEAHVTQSLLHTHSGDVMKPSQNLTSAFHKRKQEDAHEFLMFTLETMHESCLQVHRQSEPTSEDSSPIHDIFGGWWRSQIKCHHCQGTSYSYDPFLDIPLDISSVQSVKQALQDTEKAEELCGENSYYCGRCRQKKPASKTLKLYSAPKVLMLVLKRFSGSMGKKLDRKVSYPEFLDLKPYLSQPTGGPLPYALYAVLVHEGATCHSGHYFCCVKAGHGKWYKMDDTKVTSCDVTSVLNENAYVLFYVQQNDLKKGSINMPEGRIHEVLDAKYQLKKSGEKKHNKSPCTEDAGEPCENREKRSSKETSLGEGKVLQEQDHQKAGQKQENTKLTPQEQNHEKGGQNLRNTEGELDRLSGAIVVYQPICTAN.

Residues 1–20 (MVVALSFPEADPAMSPPSAP) form a disordered region. One can recognise a USP domain in the interval 51–348 (CGLQNTGNSC…NAYVLFYVQQ (298 aa)). The Nucleophile role is filled by Cys-60. The active-site Proton acceptor is His-307. Residues 374–449 (KKSGEKKHNK…GGQNLRNTEG (76 aa)) form a disordered region. Basic and acidic residues predominate over residues 394–403 (CENREKRSSK). Positions 422–434 (GQKQENTKLTPQE) are enriched in polar residues.

It belongs to the peptidase C19 family. USP17 subfamily. In terms of processing, ubiquitinated. Detected in brain, heart, liver, lung, kidney, ovary and spleen.

It carries out the reaction Thiol-dependent hydrolysis of ester, thioester, amide, peptide and isopeptide bonds formed by the C-terminal Gly of ubiquitin (a 76-residue protein attached to proteins as an intracellular targeting signal).. With respect to regulation, inhibited by ubiquitin aldehyde. Functionally, deubiquitinating enzyme that removes conjugated ubiquitin from specific proteins to regulate different cellular processes. The protein is Ubiquitin carboxyl-terminal hydrolase 17-like protein B of Mus musculus (Mouse).